The following is a 197-amino-acid chain: Adenylylsulfatase HINT3 (197 aa).

The tract at residues asparagine 14–serine 43 is disordered. The HIT domain occupies valine 51–tryptophan 158. The Histidine triad motif motif lies at histidine 143–histidine 147. The active-site Tele-AMP-histidine intermediate is the histidine 145. Histidine 147 contacts substrate.

The protein localises to the peroxisome. The enzyme catalyses adenosine 5'-phosphosulfate + H2O = sulfate + AMP + 2 H(+). Possesses adenylylsulfatase activity in vitro. This is Adenylylsulfatase HINT3 from Arabidopsis thaliana (Mouse-ear cress).